Consider the following 204-residue polypeptide: N-(5'-phosphoribosyl)anthranilate isomerase (204 aa).

It belongs to the TrpF family.

The enzyme catalyses N-(5-phospho-beta-D-ribosyl)anthranilate = 1-(2-carboxyphenylamino)-1-deoxy-D-ribulose 5-phosphate. Its pathway is amino-acid biosynthesis; L-tryptophan biosynthesis; L-tryptophan from chorismate: step 3/5. This is N-(5'-phosphoribosyl)anthranilate isomerase from Syntrophomonas wolfei subsp. wolfei (strain DSM 2245B / Goettingen).